The sequence spans 802 residues: Leucine--tRNA ligase (802 aa).

A 'HIGH' region motif is present at residues 39–50; the sequence is PYPSGAGLHVGH. Positions 574-578 match the 'KMSKS' region motif; the sequence is KMSKS. Lys577 provides a ligand contact to ATP.

Belongs to the class-I aminoacyl-tRNA synthetase family.

The protein localises to the cytoplasm. It carries out the reaction tRNA(Leu) + L-leucine + ATP = L-leucyl-tRNA(Leu) + AMP + diphosphate. The protein is Leucine--tRNA ligase of Macrococcus caseolyticus (strain JCSC5402) (Macrococcoides caseolyticum).